Consider the following 82-residue polypeptide: Delta-conotoxin-like SmVIA (82 aa).

Residues 1–22 (MKLTCVMIVAVLFLIAWTFVTA) form the signal peptide. Residues 23–49 (DDSRNGLKNLFPKARHEMKNPEASKLN) constitute a propeptide that is removed on maturation. Cystine bridges form between Cys54–Cys69, Cys61–Cys73, and Cys68–Cys77. Pro65 is subject to 4-hydroxyproline.

The protein belongs to the conotoxin O1 superfamily. In terms of tissue distribution, expressed by the venom duct.

The protein localises to the secreted. In terms of biological role, delta-conotoxins bind to site 6 of voltage-gated sodium channels (Nav) and inhibit the inactivation process. In Conus stercusmuscarum (Fly-specked cone), this protein is Delta-conotoxin-like SmVIA.